We begin with the raw amino-acid sequence, 401 residues long: Histone acetyltransferase type B subunit 2 (401 aa).

5 WD repeats span residues Glu116–Ser147, Phe158–Glu189, Leu206–Asp237, Lys249–Asp280, and Gly293–Asp324. Positions Asp335 to Asp339 are interaction with the histone H4 N-terminus. Residues Gly350–Lys381 form a WD 6 repeat.

Belongs to the WD repeat RBAP46/RBAP48/MSI1 family. Component of the HAT-B complex composed of at least HAT1 and HAT2. In the cytoplasm, this complex binds to the histone H4 tail. In the nucleus, the HAT-B complex has an additional component, the histone H3/H4 chaperone HIF1.

The protein localises to the cytoplasm. It is found in the nucleus. In terms of biological role, regulatory subunit of the histone acetylase B (HAT-B) complex. The complex acetylates 'Lys-12' of histone H4 which is required for telomeric silencing. HAT2 is required for high affinity binding of the acetyltransferase to histone H4, for the nuclear location of HAT1 and for the HAT1-HIF1 interaction. Alone, it is unable to bind to H4, requiring HAT1 for high affinity interaction with the histone tail. HAT2 also has a HAT1 independent function in life-span regulation. In Saccharomyces cerevisiae (strain ATCC 204508 / S288c) (Baker's yeast), this protein is Histone acetyltransferase type B subunit 2 (HAT2).